The sequence spans 80 residues: Metallothionein-like protein type 2 (80 aa).

This sequence belongs to the metallothionein superfamily. Type 15 family.

In terms of biological role, metallothioneins have a high content of cysteine residues that bind various heavy metals. This chain is Metallothionein-like protein type 2, found in Brassica campestris (Field mustard).